The chain runs to 211 residues: Molybdenum cofactor guanylyltransferase (211 aa).

Residues 12-14 (LAG), Lys-25, Asn-53, Asp-71, and Asp-101 contribute to the GTP site. Asp-101 is a Mg(2+) binding site.

The protein belongs to the MobA family. As to quaternary structure, monomer. Mg(2+) serves as cofactor.

It localises to the cytoplasm. It catalyses the reaction Mo-molybdopterin + GTP + H(+) = Mo-molybdopterin guanine dinucleotide + diphosphate. Its function is as follows. Transfers a GMP moiety from GTP to Mo-molybdopterin (Mo-MPT) cofactor (Moco or molybdenum cofactor) to form Mo-molybdopterin guanine dinucleotide (Mo-MGD) cofactor. The polypeptide is Molybdenum cofactor guanylyltransferase (Acidovorax ebreus (strain TPSY) (Diaphorobacter sp. (strain TPSY))).